We begin with the raw amino-acid sequence, 85 residues long: Small ribosomal subunit protein bS20 (85 aa).

Belongs to the bacterial ribosomal protein bS20 family.

Binds directly to 16S ribosomal RNA. This is Small ribosomal subunit protein bS20 from Borrelia turicatae (strain 91E135).